Consider the following 244-residue polypeptide: Protein crossbronx (244 aa).

The 157-residue stretch at 20 to 176 folds into the UBC core domain; that stretch reads QQEYKILAEY…VQKNIKESKD (157 aa).

It belongs to the ubiquitin-conjugating enzyme family. FTS subfamily.

The sequence is that of Protein crossbronx (cbx) from Drosophila yakuba (Fruit fly).